The primary structure comprises 79 residues: Delta-hormotoxin-Cpt1b (79 aa).

The signal sequence occupies residues 1–20 (MKTQVLALFVLCVLFCLAES). The propeptide occupies 21-31 (RTTLNKRNDIE). Cystine bridges form between Cys-36–Cys-75, Cys-38–Cys-66, and Cys-56–Cys-76.

The protein belongs to the sea anemone sodium channel inhibitory toxin family.

The protein localises to the secreted. It is found in the nematocyst. In terms of biological role, in neuromuscular preparation of crustaceans, the toxin increased neurotransmitter release, causing repetitive firing of the axons. May affect sodium channels (Nav). This Calliactis parasitica (Sea anemone) protein is Delta-hormotoxin-Cpt1b.